The primary structure comprises 95 residues: Small ubiquitin-related modifier 4 (95 aa).

Residues 17–95 (HINLKVAGQD…VFQQPTGGVY (79 aa)) enclose the Ubiquitin-like domain. G93 is covalently cross-linked (Glycyl lysine isopeptide (Gly-Lys) (interchain with K-? in acceptor proteins)). Residues 94 to 95 (VY) constitute a propeptide that is removed on maturation.

The protein belongs to the ubiquitin family. SUMO subfamily. As to quaternary structure, interacts with SAE2. Covalently attached to a number of proteins. In terms of processing, in contrast to SUMO1, SUMO2 and SUMO3, seems to be insensitive to sentrin-specific proteases due to the presence of Pro-90. This may impair processing to mature form and conjugation to substrates. In terms of tissue distribution, expressed mainly in adult and embryonic kidney. Expressed at various levels in immune tissues, with the highest expression in the lymph node and spleen.

Ubiquitin-like protein which can be covalently attached to target lysines as a monomer. Does not seem to be involved in protein degradation and may modulate protein subcellular localization, stability or activity. Upon oxidative stress, conjugates to various anti-oxidant enzymes, chaperones, and stress defense proteins. May also conjugate to NFKBIA, TFAP2A and FOS, negatively regulating their transcriptional activity, and to NR3C1, positively regulating its transcriptional activity. Covalent attachment to its substrates requires prior activation by the E1 complex SAE1-SAE2 and linkage to the E2 enzyme UBE2I. The sequence is that of Small ubiquitin-related modifier 4 (SUMO4) from Homo sapiens (Human).